A 311-amino-acid chain; its full sequence is Syndecan-1 (311 aa).

The signal sequence occupies residues 1–22 (MRRAALWLWLCALALRLQPALL). Topologically, residues 23–255 (HSVAVNMPPE…GLLDRKEVLG (233 aa)) are extracellular. Disordered regions lie at residues 31-85 (PEDQ…PDAI) and 141-244 (TMAP…TGAS). Acidic residues predominate over residues 32–42 (EDQDGSGDDSD). An O-linked (Xyl...) (chondroitin sulfate) serine glycan is attached at Ser37. The N-linked (GlcNAc...) asparagine glycan is linked to Asn43. 2 O-linked (Xyl...) (heparan sulfate) serine glycosylation sites follow: Ser45 and Ser47. Over residues 71 to 84 (TTTATAPEPTSPDA) the composition is skewed to low complexity. 2 stretches are compositionally biased toward basic and acidic residues: residues 151–162 (PHRDVQPDHHET) and 169–180 (GRMEPHRPHVEE). 2 O-linked (Xyl...) (chondroitin sulfate) serine glycosylation sites follow: Ser204 and Ser214. The segment covering 215 to 226 (GENAAGAAGEPG) has biased composition (low complexity). The helical transmembrane segment at 256-276 (GVIAGGLVGLIFAVCLVGFML) threads the bilayer. Over 277–311 (YRMKKKDEGSYSLEEPKQANGGAYQKPTKQEEFYA) the chain is Cytoplasmic. Residues 285–311 (GSYSLEEPKQANGGAYQKPTKQEEFYA) are disordered. The residue at position 286 (Ser286) is a Phosphoserine.

The protein belongs to the syndecan proteoglycan family. In terms of assembly, interacts with CDCP1. Interacts (via C-terminus) with TIAM1 (via PDZ domain). Interacts with MDK. Shedding is enhanced by a number of factors such as heparanase, thrombin or EGF. Also by stress and wound healing. PMA-mediated shedding is inhibited by TIMP3.

The protein localises to the membrane. Its subcellular location is the secreted. The protein resides in the extracellular exosome. Cell surface proteoglycan that contains both heparan sulfate and chondroitin sulfate and that links the cytoskeleton to the interstitial matrix. Regulates exosome biogenesis in concert with SDCBP and PDCD6IP. Able to induce its own expression in dental mesenchymal cells and also in the neighboring dental epithelial cells via an MSX1-mediated pathway. This chain is Syndecan-1, found in Bos taurus (Bovine).